Here is a 257-residue protein sequence, read N- to C-terminus: Nickel import system ATP-binding protein NikD (257 aa).

In terms of domain architecture, ABC transporter spans 4–245 (IDIQNLTIKN…HLHPYTERLI (242 aa)). 37 to 44 (GESGAGKS) is an ATP binding site.

The protein belongs to the ABC transporter superfamily. As to quaternary structure, the complex is composed of two ATP-binding proteins (NikD and NikE), two transmembrane proteins (NikB and NikC) and a solute-binding protein (NikA).

It is found in the cell membrane. It carries out the reaction Ni(2+)(out) + ATP + H2O = Ni(2+)(in) + ADP + phosphate + H(+). In terms of biological role, part of the ABC transporter complex NikABCDE (Opp2) involved in nickel import. Probably responsible for energy coupling to the transport system. The chain is Nickel import system ATP-binding protein NikD from Staphylococcus aureus (strain MW2).